A 141-amino-acid polypeptide reads, in one-letter code: Vesicle-associated membrane protein 4 (141 aa).

Positions 1-51 (MPPKFKRHLNDDDVTGSVKSERRNLLEDDSDEEEDFFLRGPSGPRFGPRND) are disordered. Residues 1-118 (MPPKFKRHLN…MWWRGCKIKA (118 aa)) lie on the Cytoplasmic side of the membrane. S17 and S30 each carry phosphoserine. Positions 52-112 (KIKHVQNQVD…KQLRRQMWWR (61 aa)) constitute a v-SNARE coiled-coil homology domain. Residues 119-139 (IMALAAAILLLMIIILIVVKF) form a helical; Anchor for type IV membrane protein membrane-spanning segment. Over 140–141 (RT) the chain is Vesicular.

The protein belongs to the synaptobrevin family. As to quaternary structure, identified in a complex containing STX6, STX12, VAMP4 and VTI1A. Interacts with BAIAP3; this interaction is increased in the presence of calcium. Post-translationally, (Microbial infection) Targeted and hydrolyzed by C.botulinum neurotoxin type X (BoNT/X) which hydrolyzes the 87-Arg-|-Ser-88 bond and probably inhibits neurotransmitter release. It remains unknown whether BoNT/X is ever produced, or what organisms it targets.

It localises to the golgi apparatus. The protein resides in the trans-Golgi network membrane. Functionally, involved in the pathway that functions to remove an inhibitor (probably synaptotagmin-4) of calcium-triggered exocytosis during the maturation of secretory granules. May be a marker for this sorting pathway that is critical for remodeling the secretory response of granule. The sequence is that of Vesicle-associated membrane protein 4 (Vamp4) from Mus musculus (Mouse).